The chain runs to 382 residues: Nitric oxide reductase FlRd-NAD(+) reductase (382 aa).

The protein belongs to the FAD-dependent oxidoreductase family. FAD is required as a cofactor.

The protein resides in the cytoplasm. The enzyme catalyses 2 reduced [nitric oxide reductase rubredoxin domain] + NAD(+) + H(+) = 2 oxidized [nitric oxide reductase rubredoxin domain] + NADH. It participates in nitrogen metabolism; nitric oxide reduction. Its function is as follows. One of at least two accessory proteins for anaerobic nitric oxide (NO) reductase. Reduces the rubredoxin moiety of NO reductase. This Vibrio vulnificus (strain YJ016) protein is Nitric oxide reductase FlRd-NAD(+) reductase.